A 269-amino-acid chain; its full sequence is Shikimate dehydrogenase (NADP(+)) (269 aa).

Shikimate is bound by residues 14 to 16 and threonine 61; that span reads SLS. Catalysis depends on lysine 65, which acts as the Proton acceptor. Glutamate 76 contacts NADP(+). Positions 85 and 99 each coordinate shikimate. NADP(+) contacts are provided by residues 123-127, 146-151, and isoleucine 209; these read GAGGA and NRTPER. Tyrosine 211 provides a ligand contact to shikimate. Glycine 231 lines the NADP(+) pocket.

This sequence belongs to the shikimate dehydrogenase family. In terms of assembly, homodimer.

It catalyses the reaction shikimate + NADP(+) = 3-dehydroshikimate + NADPH + H(+). It participates in metabolic intermediate biosynthesis; chorismate biosynthesis; chorismate from D-erythrose 4-phosphate and phosphoenolpyruvate: step 4/7. Involved in the biosynthesis of the chorismate, which leads to the biosynthesis of aromatic amino acids. Catalyzes the reversible NADPH linked reduction of 3-dehydroshikimate (DHSA) to yield shikimate (SA). The sequence is that of Shikimate dehydrogenase (NADP(+)) from Methanothrix thermoacetophila (strain DSM 6194 / JCM 14653 / NBRC 101360 / PT) (Methanosaeta thermophila).